The following is a 349-amino-acid chain: Methylthioribose-1-phosphate isomerase (349 aa).

Substrate-binding positions include 49–51 (RGA), Arg-92, and Gln-199. Catalysis depends on Asp-240, which acts as the Proton donor. Residue 250–251 (NK) participates in substrate binding.

It belongs to the eIF-2B alpha/beta/delta subunits family. MtnA subfamily.

It catalyses the reaction 5-(methylsulfanyl)-alpha-D-ribose 1-phosphate = 5-(methylsulfanyl)-D-ribulose 1-phosphate. It functions in the pathway amino-acid biosynthesis; L-methionine biosynthesis via salvage pathway; L-methionine from S-methyl-5-thio-alpha-D-ribose 1-phosphate: step 1/6. In terms of biological role, catalyzes the interconversion of methylthioribose-1-phosphate (MTR-1-P) into methylthioribulose-1-phosphate (MTRu-1-P). This Syntrophobacter fumaroxidans (strain DSM 10017 / MPOB) protein is Methylthioribose-1-phosphate isomerase.